The sequence spans 265 residues: Isoprenyl transferase (265 aa).

Aspartate 35 is a catalytic residue. Residue aspartate 35 coordinates Mg(2+). Substrate contacts are provided by residues 36–39, tryptophan 40, arginine 48, histidine 52, and 80–82; these read GNGR and SIE. The active-site Proton acceptor is the asparagine 83. Substrate-binding positions include tryptophan 84, arginine 86, arginine 203, and 209–211; that span reads RIS. A Mg(2+)-binding site is contributed by glutamate 222.

This sequence belongs to the UPP synthase family. As to quaternary structure, homodimer. Requires Mg(2+) as cofactor.

Catalyzes the condensation of isopentenyl diphosphate (IPP) with allylic pyrophosphates generating different type of terpenoids. The chain is Isoprenyl transferase from Chlorobaculum tepidum (strain ATCC 49652 / DSM 12025 / NBRC 103806 / TLS) (Chlorobium tepidum).